The primary structure comprises 103 residues: Large ribosomal subunit protein bL21 (103 aa).

The protein belongs to the bacterial ribosomal protein bL21 family. As to quaternary structure, part of the 50S ribosomal subunit. Contacts protein L20.

Functionally, this protein binds to 23S rRNA in the presence of protein L20. This is Large ribosomal subunit protein bL21 from Saccharophagus degradans (strain 2-40 / ATCC 43961 / DSM 17024).